The sequence spans 238 residues: Large ribosomal subunit protein uL1 (238 aa).

It belongs to the universal ribosomal protein uL1 family. In terms of assembly, part of the 50S ribosomal subunit.

In terms of biological role, binds directly to 23S rRNA. The L1 stalk is quite mobile in the ribosome, and is involved in E site tRNA release. Protein L1 is also a translational repressor protein, it controls the translation of the L11 operon by binding to its mRNA. This Salinispora arenicola (strain CNS-205) protein is Large ribosomal subunit protein uL1.